Consider the following 101-residue polypeptide: Large ribosomal subunit protein uL23 (101 aa).

It belongs to the universal ribosomal protein uL23 family. Part of the 50S ribosomal subunit. Contacts protein L29, and trigger factor when it is bound to the ribosome.

In terms of biological role, one of the early assembly proteins it binds 23S rRNA. One of the proteins that surrounds the polypeptide exit tunnel on the outside of the ribosome. Forms the main docking site for trigger factor binding to the ribosome. The polypeptide is Large ribosomal subunit protein uL23 (Micrococcus luteus (strain ATCC 4698 / DSM 20030 / JCM 1464 / CCM 169 / CCUG 5858 / IAM 1056 / NBRC 3333 / NCIMB 9278 / NCTC 2665 / VKM Ac-2230) (Micrococcus lysodeikticus)).